Reading from the N-terminus, the 281-residue chain is MLEIIFEDDHDAAAFLHLIQHSDDRNNIIVREGIRKIGIEKANPAFPIQRFMEPILVKFFLECKEDEHMLSLIEETYCFTDQDEQQQILQLAHSIIEGEADDLPFEPLKLSRKQSILDELQTICLEEGVFYIRSFQTFRLGSYYKQLRDITEAAIDEYKMEQEYQNFIQTLRDYVDAKQPRIKKVHIVHDGSFTLWELRYVPEREKMKYIDRRFVRDHPMYIDSHLLAPLISIAPDEVVLYTDQPEHMMARTIQNVFQERVEMLPLHAFTDAEIPVKHSEG.

This is an uncharacterized protein from Bacillus subtilis (strain 168).